A 148-amino-acid chain; its full sequence is Small ribosomal subunit protein eS19 (148 aa).

This sequence belongs to the eukaryotic ribosomal protein eS19 family.

This chain is Small ribosomal subunit protein eS19 (rps19), found in Dictyostelium discoideum (Social amoeba).